The sequence spans 221 residues: Glutathione S-transferase (221 aa).

The region spanning 3–83 (GKPVLHYANT…YIAGKYNLYG (81 aa)) is the GST N-terminal domain. Glutathione-binding positions include Tyr9, Lys45, 54 to 55 (QV), and 67 to 68 (QT). The GST C-terminal domain maps to 85–208 (DLKERALIDM…QPGSQRKPRL (124 aa)).

This sequence belongs to the GST superfamily. Alpha family. In terms of assembly, homodimer or heterodimer of GSTA1 and GSTA2.

It catalyses the reaction RX + glutathione = an S-substituted glutathione + a halide anion + H(+). The catalysed reaction is prostaglandin A2 + glutathione = prostaglandin A2-S-(R)-glutathione. The enzyme catalyses prostaglandin J2 + glutathione = prostaglandin J2-S-(R)-glutathione. It carries out the reaction (13S)-hydroperoxy-(9Z,11E)-octadecadienoate + 2 glutathione = (13S)-hydroxy-(9Z,11E)-octadecadienoate + glutathione disulfide + H2O. It catalyses the reaction androst-5-ene-3,17-dione = androst-4-ene-3,17-dione. In terms of biological role, glutathione S-transferase that catalyzes the nucleophilic attack of the sulfur atom of glutathione on the electrophilic groups of a wide range of exogenous and endogenous compounds. Involved in the formation of glutathione conjugates of both prostaglandin A2 (PGA2) and prostaglandin J2 (PGJ2). It also catalyzes the isomerization of D5-androstene-3,17-dione (AD) into D4-androstene-3,17-dione and may therefore play an important role in hormone biosynthesis. Through its glutathione-dependent peroxidase activity toward the fatty acid hydroperoxide (13S)-hydroperoxy-(9Z,11E)-octadecadienoate/13-HPODE it is also involved in the metabolism of oxidized linoleic acid. The sequence is that of Glutathione S-transferase from Gallus gallus (Chicken).